The following is a 237-amino-acid chain: NAD(P)H-hydrate epimerase (237 aa).

Residues 11–223 enclose the YjeF N-terminal domain; that stretch reads AASLDRDLMN…GLDIPEYPGV (213 aa). 61-65 contributes to the (6S)-NADPHX binding site; sequence NNGGD. K(+) contacts are provided by N62 and D123. (6S)-NADPHX is bound by residues 127–133 and D156; that span reads GFSFSGP. Residue S159 coordinates K(+).

The protein belongs to the NnrE/AIBP family. K(+) serves as cofactor.

The protein resides in the cytoplasm. Its subcellular location is the mitochondrion. It catalyses the reaction (6R)-NADHX = (6S)-NADHX. The catalysed reaction is (6R)-NADPHX = (6S)-NADPHX. Functionally, catalyzes the epimerization of the S- and R-forms of NAD(P)HX, a damaged form of NAD(P)H that is a result of enzymatic or heat-dependent hydration. This is a prerequisite for the S-specific NAD(P)H-hydrate dehydratase to allow the repair of both epimers of NAD(P)HX. The sequence is that of NAD(P)H-hydrate epimerase from Ajellomyces capsulatus (strain G186AR / H82 / ATCC MYA-2454 / RMSCC 2432) (Darling's disease fungus).